A 113-amino-acid polypeptide reads, in one-letter code: Large ribosomal subunit protein eL36z (113 aa).

Positions 78 to 88 (RKLGTHKRAKR) are enriched in basic residues. The tract at residues 78-113 (RKLGTHKRAKRKREEMSSVLRKMRSLGGAAAAEKKM) is disordered.

It belongs to the eukaryotic ribosomal protein eL36 family.

The protein is Large ribosomal subunit protein eL36z (RPL36A) of Arabidopsis thaliana (Mouse-ear cress).